Here is a 499-residue protein sequence, read N- to C-terminus: Ubiquitin carboxyl-terminal hydrolase 16 (499 aa).

In terms of domain architecture, USP spans 53–497 (VGLINRGNDC…YAYMLYYERV (445 aa)). The active-site Nucleophile is the Cys-62. His-407 acts as the Proton acceptor in catalysis.

It belongs to the peptidase C19 family.

The catalysed reaction is Thiol-dependent hydrolysis of ester, thioester, amide, peptide and isopeptide bonds formed by the C-terminal Gly of ubiquitin (a 76-residue protein attached to proteins as an intracellular targeting signal).. The sequence is that of Ubiquitin carboxyl-terminal hydrolase 16 (UBP16) from Saccharomyces cerevisiae (strain ATCC 204508 / S288c) (Baker's yeast).